The chain runs to 422 residues: MSDSKEPRVQPLGLLEEDPTTSGIRLFPRDFQFQQTHGHKSSTGCLGHGPLVLQLLSFALLAGVLVAILVQVYKVPSSLSQEQSEQDVIYQNLTQLKAAVGELSEKSKLQEIYQELTQLKAAVGELPEKSKQQEIYQELTQLKASVGELPEKSQLQEIYQELTRLKAAVGELPEESRLQEIYQELTRLKAAVGELPEKSRLQEIYQELTRLKAAVGELPEKSRLQEIYQELTRLKAAVGELPEKSKLQEIYQELTRLKAAVGELPDQSKQQQIYQELTDLKTAFERLCCRCPKDWTFFQGNCYFMSNSQRNWHDSVTACQEVGAQLVVIKSAEEQNFLQLQTSRSNRFSWMGLSDLNQEGTWQWVDGSPLSSSFQRYWNSGEPNNSGDEDCAEFSGSGWNDNRCNVDNYWICKKPIACFRDE.

Residues 1-49 (MSDSKEPRVQPLGLLEEDPTTSGIRLFPRDFQFQQTHGHKSSTGCLGHG) are Cytoplasmic-facing. The Endocytosis signal signature appears at 14–15 (LL). The helical; Signal-anchor for type II membrane protein transmembrane segment at 50 to 70 (PLVLQLLSFALLAGVLVAILV) threads the bilayer. The Extracellular portion of the chain corresponds to 71–422 (QVYKVPSSLS…KKPIACFRDE (352 aa)). A glycan (N-linked (GlcNAc...) asparagine) is linked at Asn-92. 8 tandem repeats follow at residues 108 to 130 (KLQE…PEKS), 131 to 151 (KQQE…ELPE), 154 to 176 (QLQE…PEES), 177 to 199 (RLQE…PEKS), 200 to 222 (RLQE…PEKS), 223 to 245 (RLQE…PEKS), 246 to 268 (KLQE…PDQS), and 269 to 291 (KQQQ…CCRC). Residues 108-292 (KLQEIYQELT…AFERLCCRCP (185 aa)) form an 8 X approximate tandem repeats region. 4 disulfides stabilise this stretch: Cys-288/Cys-418, Cys-291/Cys-302, Cys-319/Cys-412, and Cys-391/Cys-404. Residues 297–413 (FFQGNCYFMS…CNVDNYWICK (117 aa)) form the C-type lectin domain. Ca(2+) is bound by residues Glu-382, Asn-384, Ser-386, Glu-389, Asn-400, and Asp-401. Asn-384 carries an N-linked (GlcNAc...) asparagine glycan.

In terms of assembly, homotetramer.

Its subcellular location is the membrane. Functionally, probable pathogen-recognition receptor involved in peripheral immune surveillance in liver. May mediate the endocytosis of pathogens which are subsequently degraded in lysosomal compartments. Probably recognizes in a calcium-dependent manner high mannose N-linked oligosaccharides in a variety of pathogen antigens. Is a receptor for ICAM3, probably by binding to mannose-like carbohydrates. This is C-type lectin domain family 4 member M (CLEC4M) from Symphalangus syndactylus (Siamang).